The chain runs to 425 residues: MKDGKENSNATFGSFTTNLDHTKPCWYWDKKDLAHTPSQSDLDPATEARYRREGARFIFDVGTRLGLHYDTLATGITYFHRFYMFHSFKQFPRYVTGACCLFLAGKVEETPKKCKDIIKTARSLLNDVQFAQFGDDPKEEVMVLERILLQTIKFDLQVEHPYQFLLRYAKQLKGDKNKVQKLVQMAWTFVNDSLCTMLSLQWEPEIIAVAVMYLAGRLCKFDIQEWTSKQSSRRWWEQFVQDVPVELLEDICHQILDLYSQGKQPIPQQPPMQDKEKPPPPPAAPPGQSGAQNPPAQPPSKKNSPQASPPAKIKRQHVSPKDEPKAPAEQVGSKIPRLESPMPPLPVSQPPERKTPSAIPAPPAEAEPAAASELDPAQGPAPPLPHGAPPPLPHRPPPTEFGGPCSDFLSSVKHKRRYLDDDRNL.

The tract at residues 262–425 (GKQPIPQQPP…RRYLDDDRNL (164 aa)) is disordered. The segment covering 366-377 (AEPAAASELDPA) has biased composition (low complexity). The segment covering 379–399 (GPAPPLPHGAPPPLPHRPPPT) has biased composition (pro residues).

Belongs to the cyclin family.

The protein resides in the nucleus. Its function is as follows. Regulatory subunit of cyclin-dependent kinases that mediates activation of target kinases. Plays a role in transcriptional regulation via its role in regulating the phosphorylation of the C-terminal domain (CTD) of the large subunit of RNA polymerase II (POLR2A). The polypeptide is Cyclin-K (ccnk) (Danio rerio (Zebrafish)).